Reading from the N-terminus, the 129-residue chain is Glycine cleavage system H protein (129 aa).

A Lipoyl-binding domain is found at 24–106; the sequence is TYTVGITEHA…YTGGWIFKIK (83 aa). Lysine 65 bears the N6-lipoyllysine mark.

The protein belongs to the GcvH family. In terms of assembly, the glycine cleavage system is composed of four proteins: P, T, L and H. (R)-lipoate is required as a cofactor.

In terms of biological role, the glycine cleavage system catalyzes the degradation of glycine. The H protein shuttles the methylamine group of glycine from the P protein to the T protein. In Salmonella choleraesuis (strain SC-B67), this protein is Glycine cleavage system H protein.